A 313-amino-acid polypeptide reads, in one-letter code: D-alanine--D-alanine ligase (313 aa).

The ATP-grasp domain occupies 108–308 (KLVWQQLGIP…YQELVVKVLA (201 aa)). Residue 138 to 193 (VAKLGLPLFVKPASEGSSVAVIKVKTADALVPALEEAVKFDKIVVVEKSIEGGGEY) coordinates ATP. Residues Asp262, Glu275, and Asn277 each coordinate Mg(2+).

The protein belongs to the D-alanine--D-alanine ligase family. Mg(2+) is required as a cofactor. Requires Mn(2+) as cofactor.

The protein resides in the cytoplasm. It carries out the reaction 2 D-alanine + ATP = D-alanyl-D-alanine + ADP + phosphate + H(+). It participates in cell wall biogenesis; peptidoglycan biosynthesis. Cell wall formation. The sequence is that of D-alanine--D-alanine ligase from Paraburkholderia phymatum (strain DSM 17167 / CIP 108236 / LMG 21445 / STM815) (Burkholderia phymatum).